Here is a 122-residue protein sequence, read N- to C-terminus: Large ribosomal subunit protein uL14 (122 aa).

It belongs to the universal ribosomal protein uL14 family. In terms of assembly, part of the 50S ribosomal subunit. Forms a cluster with proteins L3 and L19. In the 70S ribosome, L14 and L19 interact and together make contacts with the 16S rRNA in bridges B5 and B8.

Functionally, binds to 23S rRNA. Forms part of two intersubunit bridges in the 70S ribosome. This Caldicellulosiruptor bescii (strain ATCC BAA-1888 / DSM 6725 / KCTC 15123 / Z-1320) (Anaerocellum thermophilum) protein is Large ribosomal subunit protein uL14.